The following is a 622-amino-acid chain: Low affinity potassium transport system protein Kup (622 aa).

12 consecutive transmembrane segments (helical) span residues Ile-12 to Leu-32, Val-49 to Leu-69, Phe-101 to Pro-121, Ile-134 to Leu-154, Gly-163 to Leu-183, Val-213 to Ala-233, Trp-247 to Leu-267, Pro-276 to Ala-296, Ile-337 to Phe-357, Leu-363 to Thr-383, Phe-395 to Asn-415, and Ile-419 to Thr-439.

The protein belongs to the HAK/KUP transporter (TC 2.A.72) family.

Its subcellular location is the cell inner membrane. It catalyses the reaction K(+)(in) + H(+)(in) = K(+)(out) + H(+)(out). Responsible for the low-affinity transport of potassium into the cell. Likely operates as a K(+):H(+) symporter. This chain is Low affinity potassium transport system protein Kup, found in Enterobacter sp. (strain 638).